The sequence spans 177 residues: Large ribosomal subunit protein uL6 (177 aa).

The protein belongs to the universal ribosomal protein uL6 family. As to quaternary structure, part of the 50S ribosomal subunit.

This protein binds to the 23S rRNA, and is important in its secondary structure. It is located near the subunit interface in the base of the L7/L12 stalk, and near the tRNA binding site of the peptidyltransferase center. This chain is Large ribosomal subunit protein uL6, found in Rickettsia akari (strain Hartford).